The following is a 387-amino-acid chain: Guanylate kinase 1 (387 aa).

One can recognise a Guanylate kinase-like domain in the interval 137 to 319 (EKPIVISGPS…CYKKLKNLLG (183 aa)). ATP is bound at residue 144–151 (GPSGVGKG). Residues arginine 177, arginine 270, and arginine 281 contribute to the active site. Asparagine 304 and aspartate 305 together coordinate ATP.

Belongs to the guanylate kinase family. As to quaternary structure, monomer.

The enzyme catalyses GMP + ATP = GDP + ADP. In terms of biological role, essential for recycling GMP and indirectly, cGMP. Required for normal development of the gametophyte and embryo, in association with GK2. In Arabidopsis thaliana (Mouse-ear cress), this protein is Guanylate kinase 1 (GK-1).